The following is a 955-amino-acid chain: Serine-aspartate repeat-containing protein C (955 aa).

The first 50 residues, 1–50 (MNNKKTVTNRKGMIPNRLNKFSIRKYSVGTASILVGTTLIFGLSGHEAKA), serve as a signal peptide directing secretion. Residues 51 to 166 (AEHTNGELNQ…TPKTTTIKPR (116 aa)) form a disordered region. The segment at 51 to 495 (AEHTNGELNQ…GSSTANGDQK (445 aa)) is ligand binding A region. Over residues 56–71 (GELNQSKNETTAPSEN) the composition is skewed to polar residues. Residues 72–83 (KTTEKVDSHQLK) are compositionally biased toward basic and acidic residues. A compositionally biased stretch (polar residues) spans 84 to 114 (DNTQTATADQPKVTMSDSATFKETSSNMQSP). Over residues 115–132 (QNATASQSTTQTSNVTTN) the composition is skewed to low complexity. Positions 133-164 (DKSSTTYSNETDKSNLTQAKDVSATPKTTTIK) are enriched in polar residues. 2 CNA-B domains span residues 496 to 606 (KYNL…YKTP) and 607 to 717 (KYSL…EEET). A disordered region spans residues 678–935 (TQTGTNTTED…NNSNNGTLFG (258 aa)). Acidic residues-rich tracts occupy residues 685–695 (TEDDKDADGGE) and 712–894 (YYEE…DSDS). The short motif at 918–922 (LPETG) is the LPXTG sorting signal element. The segment covering 920 to 935 (ETGSENNNSNNGTLFG) has biased composition (low complexity). A Pentaglycyl murein peptidoglycan amidated threonine modification is found at T921. Positions 922–955 (GSENNNSNNGTLFGGLFAALGSLLLFGRRKKQNK) are cleaved as a propeptide — removed by sortase.

Belongs to the serine-aspartate repeat-containing protein (SDr) family. Homodimerizes; via N2-Domain. Interacts with host NRXN1; this interaction mediates bacterial attachment to host cells.

The protein resides in the secreted. Its subcellular location is the cell wall. In terms of biological role, cell surface-associated calcium-binding protein which plays an important role in adhesion and pathogenesis. Mediates interactions with components of the extracellular matrix such as host NRXN1 to promote bacterial adhesion. This Staphylococcus aureus (strain MW2) protein is Serine-aspartate repeat-containing protein C (sdrC).